Consider the following 79-residue polypeptide: Small ribosomal subunit protein uS17 (79 aa).

Belongs to the universal ribosomal protein uS17 family. Part of the 30S ribosomal subunit.

Functionally, one of the primary rRNA binding proteins, it binds specifically to the 5'-end of 16S ribosomal RNA. The chain is Small ribosomal subunit protein uS17 from Rhizobium etli (strain ATCC 51251 / DSM 11541 / JCM 21823 / NBRC 15573 / CFN 42).